The chain runs to 643 residues: Pescadillo homolog (643 aa).

Residues 305 to 323 (EKTKEKNHKSDNNPHEHTT) show a composition bias toward basic and acidic residues. The interval 305–329 (EKTKEKNHKSDNNPHEHTTNIDNNN) is disordered. Residues 378–474 (KLKELFKNHI…NILPCSDYLT (97 aa)) form the BRCT domain. A coiled-coil region spans residues 531 to 615 (NYKEEEEEEN…IVLSKKKRKL (85 aa)).

It belongs to the pescadillo family. As to quaternary structure, interacts with dual specificity protein phosphatase YVH1.

The protein resides in the nucleus. The protein localises to the nucleolus. Its subcellular location is the nucleoplasm. Functionally, required for maturation of ribosomal RNAs and formation of the large ribosomal subunit. The sequence is that of Pescadillo homolog from Plasmodium falciparum (isolate 3D7).